A 171-amino-acid chain; its full sequence is Transcription antitermination protein NusB (171 aa).

It belongs to the NusB family.

In terms of biological role, involved in transcription antitermination. Required for transcription of ribosomal RNA (rRNA) genes. Binds specifically to the boxA antiterminator sequence of the ribosomal RNA (rrn) operons. This chain is Transcription antitermination protein NusB, found in Brucella ovis (strain ATCC 25840 / 63/290 / NCTC 10512).